The sequence spans 159 residues: Ribosomal RNA large subunit methyltransferase H (159 aa).

Residues leucine 76, glycine 108, and phenylalanine 127–phenylalanine 132 contribute to the S-adenosyl-L-methionine site.

It belongs to the RNA methyltransferase RlmH family. In terms of assembly, homodimer.

It localises to the cytoplasm. It catalyses the reaction pseudouridine(1915) in 23S rRNA + S-adenosyl-L-methionine = N(3)-methylpseudouridine(1915) in 23S rRNA + S-adenosyl-L-homocysteine + H(+). Functionally, specifically methylates the pseudouridine at position 1915 (m3Psi1915) in 23S rRNA. This is Ribosomal RNA large subunit methyltransferase H from Shouchella clausii (strain KSM-K16) (Alkalihalobacillus clausii).